We begin with the raw amino-acid sequence, 476 residues long: Cysteine--tRNA ligase (476 aa).

Cys-31 provides a ligand contact to Zn(2+). The short motif at 33-43 (PTVYNYAHIGN) is the 'HIGH' region element. Cys-211, His-236, and Glu-240 together coordinate Zn(2+). Positions 269 to 273 (KMSKS) match the 'KMSKS' region motif. An ATP-binding site is contributed by Lys-272.

It belongs to the class-I aminoacyl-tRNA synthetase family. In terms of assembly, monomer. Zn(2+) serves as cofactor.

Its subcellular location is the cytoplasm. It catalyses the reaction tRNA(Cys) + L-cysteine + ATP = L-cysteinyl-tRNA(Cys) + AMP + diphosphate. This Xanthomonas axonopodis pv. citri (strain 306) protein is Cysteine--tRNA ligase.